A 173-amino-acid polypeptide reads, in one-letter code: Co-chaperone protein HscB homolog (173 aa).

One can recognise a J domain in the interval 5-77; it reads CHYALFDLQP…PRRARYLLAI (73 aa).

The protein belongs to the HscB family. In terms of assembly, interacts with HscA and stimulates its ATPase activity.

Co-chaperone involved in the maturation of iron-sulfur cluster-containing proteins. Seems to help targeting proteins to be folded toward HscA. The protein is Co-chaperone protein HscB homolog of Pseudomonas putida (strain ATCC 700007 / DSM 6899 / JCM 31910 / BCRC 17059 / LMG 24140 / F1).